A 256-amino-acid chain; its full sequence is Ethylene-responsive transcription factor ERF084 (256 aa).

The AP2/ERF DNA-binding region spans 115 to 172 (GFMGVRKRPWGRWSAEIRDRIGRCRHWLGTFDTAEEAARAYDAAARRLRGTKAKTNFV).

Belongs to the AP2/ERF transcription factor family. ERF subfamily.

It localises to the nucleus. Functionally, probably acts as a transcriptional activator. Binds to the GCC-box pathogenesis-related promoter element. May be involved in the regulation of gene expression by stress factors and by components of stress signal transduction pathways. The protein is Ethylene-responsive transcription factor ERF084 (ERF084) of Arabidopsis thaliana (Mouse-ear cress).